Consider the following 157-residue polypeptide: Small ribosomal subunit protein uS7 (157 aa).

It belongs to the universal ribosomal protein uS7 family. Part of the 30S ribosomal subunit. Contacts proteins S9 and S11.

Its function is as follows. One of the primary rRNA binding proteins, it binds directly to 16S rRNA where it nucleates assembly of the head domain of the 30S subunit. Is located at the subunit interface close to the decoding center, probably blocks exit of the E-site tRNA. The chain is Small ribosomal subunit protein uS7 from Polaromonas naphthalenivorans (strain CJ2).